A 264-amino-acid chain; its full sequence is Thymidylate synthase (264 aa).

Arg-21 is a binding site for dUMP. His-51 provides a ligand contact to (6R)-5,10-methylene-5,6,7,8-tetrahydrofolate. DUMP is bound at residue 126–127 (RR). The active-site Nucleophile is Cys-146. DUMP is bound by residues 166–169 (RSCD), Asn-177, and 207–209 (HLY). Asp-169 provides a ligand contact to (6R)-5,10-methylene-5,6,7,8-tetrahydrofolate. Position 263 (Ser-263) interacts with (6R)-5,10-methylene-5,6,7,8-tetrahydrofolate.

The protein belongs to the thymidylate synthase family. Bacterial-type ThyA subfamily. In terms of assembly, homodimer.

The protein resides in the cytoplasm. The enzyme catalyses dUMP + (6R)-5,10-methylene-5,6,7,8-tetrahydrofolate = 7,8-dihydrofolate + dTMP. The protein operates within pyrimidine metabolism; dTTP biosynthesis. Functionally, catalyzes the reductive methylation of 2'-deoxyuridine-5'-monophosphate (dUMP) to 2'-deoxythymidine-5'-monophosphate (dTMP) while utilizing 5,10-methylenetetrahydrofolate (mTHF) as the methyl donor and reductant in the reaction, yielding dihydrofolate (DHF) as a by-product. This enzymatic reaction provides an intracellular de novo source of dTMP, an essential precursor for DNA biosynthesis. This is Thymidylate synthase from Buchnera aphidicola subsp. Acyrthosiphon pisum (strain Tuc7).